Reading from the N-terminus, the 297-residue chain is Superoxide dismutase 1 copper chaperone (297 aa).

Residue Cys-11 participates in Cu cation binding. The tract at residues 222-263 is disordered; it reads GSSCCSKKDSSPSEKPSCCSQEKKSCCSSKKPSCCSQEKKGC. Positions 234-257 are enriched in low complexity; it reads SEKPSCCSQEKKSCCSSKKPSCCS.

The protein belongs to the CCS1 family.

Its subcellular location is the cytoplasm. In terms of biological role, copper chaperone for superoxide dismutase 1 (sod1). Binds copper ions and delivers them specifically to sod1. Also has a role in cell protection against copper ion toxicity during conditions of copper excess. The C-terminal region is thought to act specifically in this sequestration role. This is Superoxide dismutase 1 copper chaperone (ccs1) from Schizosaccharomyces pombe (strain 972 / ATCC 24843) (Fission yeast).